Consider the following 149-residue polypeptide: 3-dehydroquinate dehydratase (149 aa).

Y24 serves as the catalytic Proton acceptor. Substrate contacts are provided by N75, H81, and D88. H101 acts as the Proton donor in catalysis. Substrate is bound by residues 102-103 and R112; that span reads LS.

This sequence belongs to the type-II 3-dehydroquinase family. As to quaternary structure, homododecamer.

The catalysed reaction is 3-dehydroquinate = 3-dehydroshikimate + H2O. It functions in the pathway metabolic intermediate biosynthesis; chorismate biosynthesis; chorismate from D-erythrose 4-phosphate and phosphoenolpyruvate: step 3/7. Catalyzes a trans-dehydration via an enolate intermediate. The sequence is that of 3-dehydroquinate dehydratase from Bartonella tribocorum (strain CIP 105476 / IBS 506).